We begin with the raw amino-acid sequence, 138 residues long: Class I hydrophobin 1 (138 aa).

The signal sequence occupies residues 1 to 19; that stretch reads MRFSAATVSALAMALTVAA. 4 disulfides stabilise this stretch: cysteine 45–cysteine 113, cysteine 53–cysteine 107, cysteine 54–cysteine 91, and cysteine 114–cysteine 131.

This sequence belongs to the fungal hydrophobin family. As to quaternary structure, interacts with the lipid droplet coating protein Cap20.

The protein resides in the secreted. Its subcellular location is the lipid droplet. Aerial growth, conidiation, and dispersal of filamentous fungi in the environment rely upon a capability of their secreting small amphipathic proteins called hydrophobins (HPBs) with low sequence identity. Class I can self-assemble into an outermost layer of rodlet bundles on aerial cell surfaces, conferring cellular hydrophobicity that supports fungal growth, development and dispersal; whereas Class II form highly ordered films at water-air interfaces through intermolecular interactions but contribute nothing to the rodlet structure. Hydr1 is a class I hydrophobin involved in spore germination, appressorium formation, but not in the formation of the rodlet layer of conidia. Responsible for the full virulence on rubber tree leaves. In Colletotrichum siamense (Anthracnose fungus), this protein is Class I hydrophobin 1.